A 249-amino-acid chain; its full sequence is Ribonuclease 3 (249 aa).

Residues 20–149 enclose the RNase III domain; sequence FKEFQERISV…FIGALYLDQG (130 aa). E62 lines the Mg(2+) pocket. The active site involves D66. D135 and E138 together coordinate Mg(2+). Residue E138 is part of the active site. In terms of domain architecture, DRBM spans 175–244; that stretch reads DFKSQLQEFV…AQEALAKMQK (70 aa). The tract at residues 223–249 is disordered; it reads NGRSKKEAEQHAAQEALAKMQKHHTKQ.

This sequence belongs to the ribonuclease III family. Homodimer. It depends on Mg(2+) as a cofactor.

The protein localises to the cytoplasm. It catalyses the reaction Endonucleolytic cleavage to 5'-phosphomonoester.. Its function is as follows. Digests double-stranded RNA. Involved in the processing of primary rRNA transcript to yield the immediate precursors to the large and small rRNAs (23S and 16S). Processes some mRNAs, and tRNAs when they are encoded in the rRNA operon. Processes pre-crRNA and tracrRNA of type II CRISPR loci if present in the organism. In Bacillus velezensis (strain DSM 23117 / BGSC 10A6 / LMG 26770 / FZB42) (Bacillus amyloliquefaciens subsp. plantarum), this protein is Ribonuclease 3.